Consider the following 395-residue polypeptide: S-adenosylmethionine synthase (395 aa).

His19 serves as a coordination point for ATP. Residue Asp21 coordinates Mg(2+). Position 47 (Glu47) interacts with K(+). Glu60 and Gln103 together coordinate L-methionine. A flexible loop region spans residues Gln103–Ser113. ATP is bound by residues Asp170–Lys172, Lys236–Phe237, Asp245, Arg251–Lys252, Ala268, and Lys272. Asp245 serves as a coordination point for L-methionine. Residue Lys276 coordinates L-methionine.

Belongs to the AdoMet synthase family. In terms of assembly, homotetramer; dimer of dimers. The cofactor is Mg(2+). K(+) is required as a cofactor.

It is found in the cytoplasm. The catalysed reaction is L-methionine + ATP + H2O = S-adenosyl-L-methionine + phosphate + diphosphate. Its pathway is amino-acid biosynthesis; S-adenosyl-L-methionine biosynthesis; S-adenosyl-L-methionine from L-methionine: step 1/1. Catalyzes the formation of S-adenosylmethionine (AdoMet) from methionine and ATP. The overall synthetic reaction is composed of two sequential steps, AdoMet formation and the subsequent tripolyphosphate hydrolysis which occurs prior to release of AdoMet from the enzyme. This is S-adenosylmethionine synthase from Rhodopirellula baltica (strain DSM 10527 / NCIMB 13988 / SH1).